Reading from the N-terminus, the 132-residue chain is FPRL1 inhibitory protein (132 aa).

An N-terminal signal peptide occupies residues 1-28 (MKKNITKVIIASTVIATGLLTQTNDAKA).

It belongs to the CHIPS/FLIPr family.

Its subcellular location is the secreted. Its function is as follows. May be involved in countering the first line of host defense mechanisms. Impairs the leukocyte response to FPRL1 agonists by binding directly to host FPRL1. This chain is FPRL1 inhibitory protein (flr), found in Staphylococcus aureus (strain MW2).